The chain runs to 494 residues: MLTSGLLLVAAVAFLSVLVLMSVWKQRKLSGKLPPGPTPLPFIGNFLQLNTEQMYNSLMKISQRYGPVFTIYLGPRRIVVLCGQEAVKEALVDQAEEFSGRGEQATFDWLFKGYGVVFSSGERAKQLRRFSIATLRDFGVGKRGIEERIQEEAGFLIDSFRKTNGAFIDPTFYLSRTVSNVISSIVFGDRFDYEDKEFLSLLRMMLGSFQFTATSMGQLYEMFSSVMKHLPGPQQQAFKELQGLEDFITKKVEHNQRTLDPNSPRDFIDSFLIRMLEEKKNPNTEFYMKNLVLTTLNLFFAGTETVSTTLRYGFLLLMKHPDIEAKVHEEIDRVIGRNRQPKYEDRMKMPYTEAVIHEIQRFADMIPMGLARRVTKDTKFRDFLLPKGTEVFPMLGSVLKDPKFFSNPKDFNPKHFLDDKGQFKKNDAFVPFSIGKRYCFGEGLARMELFLFLTNIMQNFHFKSTQAPQDIDVSPRLVGFATIPPTYTMSFLSR.

At S131 the chain carries Phosphoserine. K379 carries the N6-acetyllysine modification. C439 contributes to the heme binding site.

It belongs to the cytochrome P450 family. Requires heme as cofactor. As to expression, liver, with a strong circadian rhythmicity. Circadian expression is regulated by DBP.

It is found in the endoplasmic reticulum membrane. Its subcellular location is the microsome membrane. It catalyses the reaction an organic molecule + reduced [NADPH--hemoprotein reductase] + O2 = an alcohol + oxidized [NADPH--hemoprotein reductase] + H2O + H(+). Its function is as follows. Exhibits a high coumarin 7-hydroxylase activity. The chain is Cytochrome P450 2A5 (Cyp2a5) from Mus musculus (Mouse).